A 442-amino-acid chain; its full sequence is C4-dicarboxylate transport protein 4 (442 aa).

Transmembrane regions (helical) follow at residues 20-40 (ILYV…YFYP), 53-73 (FIAL…VHGI), 90-110 (LIYF…VGEV), 160-180 (GDLL…AFLG), 209-229 (PVGA…GSLL), and 233-253 (ALIG…LGAI).

The protein belongs to the dicarboxylate/amino acid:cation symporter (DAACS) (TC 2.A.23) family.

It is found in the cell inner membrane. Functionally, responsible for the transport of dicarboxylates such as succinate, fumarate, and malate from the periplasm across the membrane. In Bradyrhizobium diazoefficiens (strain JCM 10833 / BCRC 13528 / IAM 13628 / NBRC 14792 / USDA 110), this protein is C4-dicarboxylate transport protein 4.